Consider the following 118-residue polypeptide: Small ribosomal subunit protein uS13 (118 aa).

Positions 93–118 (RSLPVRGQRSKTNARTRKGPRKPIKK) are disordered.

This sequence belongs to the universal ribosomal protein uS13 family. In terms of assembly, part of the 30S ribosomal subunit. Forms a loose heterodimer with protein S19. Forms two bridges to the 50S subunit in the 70S ribosome.

Functionally, located at the top of the head of the 30S subunit, it contacts several helices of the 16S rRNA. In the 70S ribosome it contacts the 23S rRNA (bridge B1a) and protein L5 of the 50S subunit (bridge B1b), connecting the 2 subunits; these bridges are implicated in subunit movement. Contacts the tRNAs in the A and P-sites. This Teredinibacter turnerae (strain ATCC 39867 / T7901) protein is Small ribosomal subunit protein uS13.